Reading from the N-terminus, the 629-residue chain is Histone-lysine N-methyltransferase set9 (629 aa).

In terms of domain architecture, SET spans Cys120–Gly234. Polar residues-rich tracts occupy residues Ser264–Ala274, Glu338–Asp350, Asn359–Ala376, and Glu390–Pro400. 2 disordered regions span residues Ser264–Pro400 and Val586–Met629. The segment covering Ser597 to Asn614 has biased composition (basic and acidic residues).

The protein belongs to the class V-like SAM-binding methyltransferase superfamily. Histone-lysine methyltransferase family. Suvar4-20 subfamily.

It localises to the nucleus. It is found in the chromosome. It catalyses the reaction L-lysyl(20)-[histone H4] + 3 S-adenosyl-L-methionine = N(6),N(6),N(6)-trimethyl-L-lysyl(20)-[histone H4] + 3 S-adenosyl-L-homocysteine + 3 H(+). Histone methyltransferase that trimethylates 'Lys-20' of histone H4 to form H4K20me3. The protein is Histone-lysine N-methyltransferase set9 (set9) of Aspergillus terreus (strain NIH 2624 / FGSC A1156).